The primary structure comprises 204 residues: Thymidylate kinase (204 aa).

9–16 (GLDGAGKS) contacts ATP.

This sequence belongs to the thymidylate kinase family.

The catalysed reaction is dTMP + ATP = dTDP + ADP. Phosphorylation of dTMP to form dTDP in both de novo and salvage pathways of dTTP synthesis. The protein is Thymidylate kinase of Francisella philomiragia subsp. philomiragia (strain ATCC 25017 / CCUG 19701 / FSC 153 / O#319-036).